Consider the following 217-residue polypeptide: Methylthioribulose-1-phosphate dehydratase (217 aa).

Zn(2+) contacts are provided by histidine 106 and histidine 108.

The protein belongs to the aldolase class II family. MtnB subfamily. Zn(2+) is required as a cofactor.

The enzyme catalyses 5-(methylsulfanyl)-D-ribulose 1-phosphate = 5-methylsulfanyl-2,3-dioxopentyl phosphate + H2O. It functions in the pathway amino-acid biosynthesis; L-methionine biosynthesis via salvage pathway; L-methionine from S-methyl-5-thio-alpha-D-ribose 1-phosphate: step 2/6. Its function is as follows. Catalyzes the dehydration of methylthioribulose-1-phosphate (MTRu-1-P) into 2,3-diketo-5-methylthiopentyl-1-phosphate (DK-MTP-1-P). This chain is Methylthioribulose-1-phosphate dehydratase, found in Xanthomonas campestris pv. campestris (strain B100).